A 92-amino-acid chain; its full sequence is Probable Fe(2+)-trafficking protein (92 aa).

Belongs to the Fe(2+)-trafficking protein family.

Functionally, could be a mediator in iron transactions between iron acquisition and iron-requiring processes, such as synthesis and/or repair of Fe-S clusters in biosynthetic enzymes. This is Probable Fe(2+)-trafficking protein from Shewanella halifaxensis (strain HAW-EB4).